Consider the following 284-residue polypeptide: D-tagatose-1,6-bisphosphate aldolase subunit GatY (284 aa).

D82 functions as the Proton donor in the catalytic mechanism. Residues H83 and H180 each coordinate Zn(2+). G181 serves as a coordination point for dihydroxyacetone phosphate. H208 contacts Zn(2+). Dihydroxyacetone phosphate-binding positions include 209–211 and 230–233; these read GAS and NVAT.

Belongs to the class II fructose-bisphosphate aldolase family. TagBP aldolase GatY subfamily. Forms a complex with GatZ. Requires Zn(2+) as cofactor.

The enzyme catalyses D-tagatofuranose 1,6-bisphosphate = D-glyceraldehyde 3-phosphate + dihydroxyacetone phosphate. Its pathway is carbohydrate metabolism; D-tagatose 6-phosphate degradation; D-glyceraldehyde 3-phosphate and glycerone phosphate from D-tagatose 6-phosphate: step 2/2. Its function is as follows. Catalytic subunit of the tagatose-1,6-bisphosphate aldolase GatYZ, which catalyzes the reversible aldol condensation of dihydroxyacetone phosphate (DHAP or glycerone-phosphate) with glyceraldehyde 3-phosphate (G3P) to produce tagatose 1,6-bisphosphate (TBP). Requires GatZ subunit for full activity and stability. Is involved in the catabolism of galactitol. This Salmonella enteritidis PT4 (strain P125109) protein is D-tagatose-1,6-bisphosphate aldolase subunit GatY.